Reading from the N-terminus, the 100-residue chain is Mini zinc finger protein 2 (100 aa).

The tract at residues 1–26 (MRKRQVVLRRASPEEPSRSSSTASSL) is disordered. The segment at 33–83 (YGECQKNHAAAVGGYAVDGCREFMASRGEEGTVAALTCAACGCHRSFHRRE) adopts a ZF-HD dimerization-type; degenerate zinc-finger fold.

Homo- and heterodimers. Interacts with ZHD1, ZHD3, ZHD5, ZHD8, ZHD10 and ZHD13. Mostly expressed in stems, flowers and siliques, and, to a lower extent, in inflorescence.

The protein resides in the cytoplasm. Functionally, inhibits zinc finger homeodomain (ZHD) transcription factors by interacting with them to prevent both their nuclear localization and their DNA-binding properties. Involved in integrating signals from multiple hormones by regulating the expression of specific genes. The sequence is that of Mini zinc finger protein 2 (MIF2) from Arabidopsis thaliana (Mouse-ear cress).